A 147-amino-acid polypeptide reads, in one-letter code: uncharacterized protein (147 aa).

Positions 1–137 (MRDNTIGSLI…LYELMTKVHK (137 aa)) constitute an HTH marR-type domain. Residues 53 to 76 (QMELAEKVTVTQGGISRMLTRLEK) constitute a DNA-binding region (H-T-H motif).

This is an uncharacterized protein from Bacillus thuringiensis subsp. konkukian (strain 97-27).